The primary structure comprises 137 residues: Ribosome-binding factor A (137 aa).

It belongs to the RbfA family. As to quaternary structure, monomer. Binds 30S ribosomal subunits, but not 50S ribosomal subunits or 70S ribosomes.

The protein localises to the cytoplasm. One of several proteins that assist in the late maturation steps of the functional core of the 30S ribosomal subunit. Associates with free 30S ribosomal subunits (but not with 30S subunits that are part of 70S ribosomes or polysomes). Required for efficient processing of 16S rRNA. May interact with the 5'-terminal helix region of 16S rRNA. This Synechococcus sp. (strain ATCC 27144 / PCC 6301 / SAUG 1402/1) (Anacystis nidulans) protein is Ribosome-binding factor A.